The primary structure comprises 190 residues: Holliday junction branch migration complex subunit RuvA (190 aa).

The tract at residues 1 to 64 (MIGKLTGTLL…EDAQLLYGFG (64 aa)) is domain I. The segment at 65–143 (THSERQAFRE…ADTGAQSLFV (79 aa)) is domain II. The segment at 144-148 (NNDQN) is flexible linker. Residues 148-190 (NDIVQALMALGYSDKDAAAALKKLPPDVGVTEGIKLALKALAK) are domain III.

The protein belongs to the RuvA family. As to quaternary structure, homotetramer. Forms an RuvA(8)-RuvB(12)-Holliday junction (HJ) complex. HJ DNA is sandwiched between 2 RuvA tetramers; dsDNA enters through RuvA and exits via RuvB. An RuvB hexamer assembles on each DNA strand where it exits the tetramer. Each RuvB hexamer is contacted by two RuvA subunits (via domain III) on 2 adjacent RuvB subunits; this complex drives branch migration. In the full resolvosome a probable DNA-RuvA(4)-RuvB(12)-RuvC(2) complex forms which resolves the HJ.

Its subcellular location is the cytoplasm. Functionally, the RuvA-RuvB-RuvC complex processes Holliday junction (HJ) DNA during genetic recombination and DNA repair, while the RuvA-RuvB complex plays an important role in the rescue of blocked DNA replication forks via replication fork reversal (RFR). RuvA specifically binds to HJ cruciform DNA, conferring on it an open structure. The RuvB hexamer acts as an ATP-dependent pump, pulling dsDNA into and through the RuvAB complex. HJ branch migration allows RuvC to scan DNA until it finds its consensus sequence, where it cleaves and resolves the cruciform DNA. In Delftia acidovorans (strain DSM 14801 / SPH-1), this protein is Holliday junction branch migration complex subunit RuvA.